The sequence spans 373 residues: Probable tRNA sulfurtransferase (373 aa).

Positions 54–158 (NKNIEELSKV…NDVAYFYHKI (105 aa)) constitute a THUMP domain. ATP contacts are provided by residues 176 to 177 (LF), 201 to 202 (NF), Lys-256, Gly-278, and Gln-287.

The protein belongs to the ThiI family.

Its subcellular location is the cytoplasm. The enzyme catalyses [ThiI sulfur-carrier protein]-S-sulfanyl-L-cysteine + a uridine in tRNA + 2 reduced [2Fe-2S]-[ferredoxin] + ATP + H(+) = [ThiI sulfur-carrier protein]-L-cysteine + a 4-thiouridine in tRNA + 2 oxidized [2Fe-2S]-[ferredoxin] + AMP + diphosphate. It carries out the reaction [ThiS sulfur-carrier protein]-C-terminal Gly-Gly-AMP + S-sulfanyl-L-cysteinyl-[cysteine desulfurase] + AH2 = [ThiS sulfur-carrier protein]-C-terminal-Gly-aminoethanethioate + L-cysteinyl-[cysteine desulfurase] + A + AMP + 2 H(+). Its pathway is cofactor biosynthesis; thiamine diphosphate biosynthesis. In terms of biological role, catalyzes the ATP-dependent transfer of a sulfur to tRNA to produce 4-thiouridine in position 8 of tRNAs, which functions as a near-UV photosensor. Also catalyzes the transfer of sulfur to the sulfur carrier protein ThiS, forming ThiS-thiocarboxylate. This is a step in the synthesis of thiazole, in the thiamine biosynthesis pathway. The sulfur is donated as persulfide by IscS. This Saccharolobus islandicus (strain M.14.25 / Kamchatka #1) (Sulfolobus islandicus) protein is Probable tRNA sulfurtransferase.